Consider the following 271-residue polypeptide: Mannosyl-3-phosphoglycerate phosphatase (271 aa).

D13 (nucleophile) is an active-site residue. Mg(2+) is bound by residues D13, D15, and D214.

Belongs to the HAD-like hydrolase superfamily. MPGP family. Requires Mg(2+) as cofactor.

It localises to the cytoplasm. It carries out the reaction 2-O-(alpha-D-mannosyl)-3-phosphoglycerate + H2O = (2R)-2-O-(alpha-D-mannosyl)-glycerate + phosphate. In Escherichia coli O139:H28 (strain E24377A / ETEC), this protein is Mannosyl-3-phosphoglycerate phosphatase.